A 275-amino-acid polypeptide reads, in one-letter code: NAD kinase (275 aa).

The active-site Proton acceptor is the Asp-68. Residues 68–69 (DG), Arg-73, 136–137 (NE), Lys-147, Arg-164, Asp-166, 177–182 (TAYAMS), Ala-201, and Gln-236 each bind NAD(+).

Belongs to the NAD kinase family. Requires a divalent metal cation as cofactor.

The protein localises to the cytoplasm. It catalyses the reaction NAD(+) + ATP = ADP + NADP(+) + H(+). Its function is as follows. Involved in the regulation of the intracellular balance of NAD and NADP, and is a key enzyme in the biosynthesis of NADP. Catalyzes specifically the phosphorylation on 2'-hydroxyl of the adenosine moiety of NAD to yield NADP. The protein is NAD kinase of Methanosarcina barkeri (strain Fusaro / DSM 804).